The chain runs to 396 residues: NAD(P)H oxidoreductase RTN4IP1, mitochondrial (396 aa).

The transit peptide at 1-40 (MEFLKTCVLRRNACTAVCFWRSKVVQKPSVRRISTTSPRS) directs the protein to the mitochondrion. An Enoyl reductase (ER) domain is found at 52–393 (GKNEVLRFTQ…RGHARGKTVI (342 aa)). NADPH-binding residues include S214, G216, V217, S237, Y255, N276, L300, A341, F343, H386, A387, and R388.

Belongs to the zinc-containing alcohol dehydrogenase family. Quinone oxidoreductase subfamily. Interacts with RTN4, UQCRC1 and UQCRC2. Widely expressed in mitochondria-enriched tissues. Found in heart, muscle, kidney, liver, brain and placenta.

The protein resides in the mitochondrion matrix. The protein localises to the mitochondrion outer membrane. It carries out the reaction a 3-demethylubiquinone + NADH + 2 H(+) = a 3-demethylubiquinol + NAD(+). It catalyses the reaction a 3-demethylubiquinone + NADPH + 2 H(+) = a 3-demethylubiquinol + NADP(+). The enzyme catalyses 3-demethylubiquinone-10 + NADH + 2 H(+) = 3-demethylubiquinol-10 + NAD(+). The catalysed reaction is 3-demethylubiquinone-10 + NADPH + 2 H(+) = 3-demethylubiquinol-10 + NADP(+). Its pathway is cofactor biosynthesis; ubiquinone biosynthesis. Functionally, NAD(P)H oxidoreductase involved in the ubiquinone biosynthetic pathway. Required for the O-methyltransferase activity of COQ3. Able to catalyze the oxidoreduction of 3-demethylubiquinone into 3-demethylubiquinol in vitro. However, it is unclear if 3-demethylubiquinone constitutes a substrate in vivo. May also play a role in the regulation of retinal ganglion cell (RGC) neurite outgrowth, and hence in the development of the inner retina and optic nerve. Appears to be a potent inhibitor of regeneration following spinal cord injury. This Homo sapiens (Human) protein is NAD(P)H oxidoreductase RTN4IP1, mitochondrial.